Here is a 328-residue protein sequence, read N- to C-terminus: MADIYPWQQALWSQLGGRAQHAHAYLLYGPAGIGKRALAEHWAAQLLCQRPAAAGACGECKACQLLAAGTHPDYFVLEPEEAEKPIRVDQVRDLVGFVVQTAQLGGRKVVLLEPAEAMNVNAANALLKSLEEPSGDTVLLLISHQPSRLLPTIKSRCVQQACPLPGAAASLEWLARALPDEPAEALEELLALSGGSPLTAQRLHGQGVREQRAQVVEGVKKLLKQQIAASPLAESWNSVPLPLLFDWFCDWTLGILRYQLTHDEEGLGLADMRKVIQYLGDKSGQAKVLAMQDWLLQQRQKVLNKANLNRVLLLEALLVQWASLPGPG.

In terms of assembly, DNA polymerase III contains a core (composed of alpha, epsilon and theta chains) that associates with a tau subunit. This core dimerizes to form the POLIII' complex. PolIII' associates with the gamma complex (composed of gamma, delta, delta', psi and chi chains) and with the beta chain to form the complete DNA polymerase III complex.

The enzyme catalyses DNA(n) + a 2'-deoxyribonucleoside 5'-triphosphate = DNA(n+1) + diphosphate. Its function is as follows. DNA polymerase III is a complex, multichain enzyme responsible for most of the replicative synthesis in bacteria. This DNA polymerase also exhibits 3' to 5' exonuclease activity. This chain is DNA polymerase III subunit delta' (holB), found in Pseudomonas aeruginosa (strain ATCC 15692 / DSM 22644 / CIP 104116 / JCM 14847 / LMG 12228 / 1C / PRS 101 / PAO1).